The primary structure comprises 337 residues: Biotin synthase (337 aa).

Residues proline 58–arginine 283 form the Radical SAM core domain. Residues cysteine 73, cysteine 77, and cysteine 80 each contribute to the [4Fe-4S] cluster site. Cysteine 116, cysteine 149, cysteine 208, and arginine 278 together coordinate [2Fe-2S] cluster.

Belongs to the radical SAM superfamily. Biotin synthase family. As to quaternary structure, homodimer. Requires [4Fe-4S] cluster as cofactor. It depends on [2Fe-2S] cluster as a cofactor.

It catalyses the reaction (4R,5S)-dethiobiotin + (sulfur carrier)-SH + 2 reduced [2Fe-2S]-[ferredoxin] + 2 S-adenosyl-L-methionine = (sulfur carrier)-H + biotin + 2 5'-deoxyadenosine + 2 L-methionine + 2 oxidized [2Fe-2S]-[ferredoxin]. It functions in the pathway cofactor biosynthesis; biotin biosynthesis; biotin from 7,8-diaminononanoate: step 2/2. Its function is as follows. Catalyzes the conversion of dethiobiotin (DTB) to biotin by the insertion of a sulfur atom into dethiobiotin via a radical-based mechanism. The sequence is that of Biotin synthase from Rhodococcus jostii (strain RHA1).